The following is a 491-amino-acid chain: 3-octaprenyl-4-hydroxybenzoate carboxy-lyase (491 aa).

Asparagine 172 contacts Mn(2+). Prenylated FMN contacts are provided by residues 175-177 (IYR), 189-191 (RWL), and 194-195 (RG). Glutamate 238 contributes to the Mn(2+) binding site. Aspartate 287 acts as the Proton donor in catalysis.

The protein belongs to the UbiD family. Homohexamer. It depends on prenylated FMN as a cofactor. The cofactor is Mn(2+).

The protein localises to the cell membrane. It catalyses the reaction a 4-hydroxy-3-(all-trans-polyprenyl)benzoate + H(+) = a 2-(all-trans-polyprenyl)phenol + CO2. Its pathway is cofactor biosynthesis; ubiquinone biosynthesis. In terms of biological role, catalyzes the decarboxylation of 3-octaprenyl-4-hydroxy benzoate to 2-octaprenylphenol, an intermediate step in ubiquinone biosynthesis. The chain is 3-octaprenyl-4-hydroxybenzoate carboxy-lyase from Histophilus somni (strain 129Pt) (Haemophilus somnus).